Here is a 209-residue protein sequence, read N- to C-terminus: Imidazole glycerol phosphate synthase subunit HisH (209 aa).

The region spanning 1–205 (MIAIIDYGMG…KGVVETWKSS (205 aa)) is the Glutamine amidotransferase type-1 domain. Cysteine 79 serves as the catalytic Nucleophile. Catalysis depends on residues histidine 180 and glutamate 182.

In terms of assembly, heterodimer of HisH and HisF.

Its subcellular location is the cytoplasm. The catalysed reaction is 5-[(5-phospho-1-deoxy-D-ribulos-1-ylimino)methylamino]-1-(5-phospho-beta-D-ribosyl)imidazole-4-carboxamide + L-glutamine = D-erythro-1-(imidazol-4-yl)glycerol 3-phosphate + 5-amino-1-(5-phospho-beta-D-ribosyl)imidazole-4-carboxamide + L-glutamate + H(+). The enzyme catalyses L-glutamine + H2O = L-glutamate + NH4(+). It functions in the pathway amino-acid biosynthesis; L-histidine biosynthesis; L-histidine from 5-phospho-alpha-D-ribose 1-diphosphate: step 5/9. IGPS catalyzes the conversion of PRFAR and glutamine to IGP, AICAR and glutamate. The HisH subunit catalyzes the hydrolysis of glutamine to glutamate and ammonia as part of the synthesis of IGP and AICAR. The resulting ammonia molecule is channeled to the active site of HisF. The chain is Imidazole glycerol phosphate synthase subunit HisH from Bacillus anthracis (strain CDC 684 / NRRL 3495).